The following is a 374-amino-acid chain: tRNA-specific 2-thiouridylase MnmA (374 aa).

ATP is bound by residues 13-20 (GMSGGVDS) and Met-39. Residues 99 to 101 (NPD) are interaction with target base in tRNA. Residue Cys-104 is the Nucleophile of the active site. Cys-104 and Cys-201 are disulfide-bonded. Gly-128 provides a ligand contact to ATP. An interaction with tRNA region spans residues 151–153 (KDQ). The Cysteine persulfide intermediate role is filled by Cys-201. Positions 313 to 314 (RY) are interaction with tRNA.

Belongs to the MnmA/TRMU family.

The protein resides in the cytoplasm. It catalyses the reaction S-sulfanyl-L-cysteinyl-[protein] + uridine(34) in tRNA + AH2 + ATP = 2-thiouridine(34) in tRNA + L-cysteinyl-[protein] + A + AMP + diphosphate + H(+). Catalyzes the 2-thiolation of uridine at the wobble position (U34) of tRNA, leading to the formation of s(2)U34. The sequence is that of tRNA-specific 2-thiouridylase MnmA from Streptococcus suis (strain 98HAH33).